The primary structure comprises 532 residues: Transcriptional regulatory protein RtcR (532 aa).

The 239-residue stretch at I186–T424 folds into the Sigma-54 factor interaction domain. ATP-binding positions include G215–S222 and A281–E290. The H-T-H motif DNA-binding region spans K485–S504.

In terms of biological role, transcriptional repressor of the rtcAB genes. Interacts with sigma-54. The sequence is that of Transcriptional regulatory protein RtcR (rtcR) from Escherichia coli (strain K12).